Here is a 38-residue protein sequence, read N- to C-terminus: Large ribosomal subunit protein bL36 (38 aa).

This sequence belongs to the bacterial ribosomal protein bL36 family.

The polypeptide is Large ribosomal subunit protein bL36 (Thermotoga maritima (strain ATCC 43589 / DSM 3109 / JCM 10099 / NBRC 100826 / MSB8)).